The primary structure comprises 1923 residues: MVPVSFCFFFLLLLLSAGESSSQLVSGPHITDVNILLPPKMKNPVEYRLQGSDGCFKWSWDHHDILSVTPEFNSSSHCSTSARLRSISPYSGRKETAVYATDIQTGMVIRCKVFIDNFSRIQIFHNSIKLDLDGLSMLRVRAFDNEDNEFSSLVGLQFIWKLMPESGGSTHHLAHVPLKESPLTDCGGLCGYLDIQKKLEDSGVFADLFVVKGTKIGHEKVSVHLLEAPLTHIADEIVLTVAEAMSLEPRSPVYVLMGASFGYTLKVMRGNVPQAVDLPSPHHRWSVLNSSVAQVDSLIGLTKALSLGVTTVVVEDTRVAGHIQGSSINVVTPDTLILYISPWSMSGDLITESKPFPSSMHWYVVSGRQYLIQMKIFSGRPDAHEIYITETDDIKLYGKDSDYWKIVSLPDELSSEYGQRNSRILNAISPGLGELTSTLTYFSGHQESKEVLKVVQEIRVCEKVQFTLNSEDDTPKVLLPWTPAVYQEMELIVTGGCAKASSDYKWFTSDISILSVSAYGIIQAKRPGIATVKVVSTFDSQNFDEVIVEVSIPSSMVMLQNFPVETVVGSHLKAAVTMKALNGATFSRCDAFNSLIKWKTGSESFVIVNATSEMMMLDELRSMDSSPPCSRASIYTASTGRTVLQATLAKEFHYFDKSLSESIDLKATLTIGAYLPLSVRQDSDGNHHGGYWFDKAQEETDFGVSKLYLVPGTYVDVMLLGGPERWDDNVEFTETVKTLYEDEEDLTSRVNVHHEVDRRANMYRISCQKLGSYKLVFLRGNLLGIDHPVPAVAEALLSVHCSLPSSVVLIVDEPVNKLDVIRAASQADRAPGRLRVTPVTVANGQIIRVAAVGISEFGEAFSNSSTLSLRWELTSCNNLAYWDDDYNSKMTKSGWERFLALRNESGLCTVRATVSGIDYSFKSQYSTLLPQGSESTLTDAVRLQLVSTLRVTPEFNLVFFNPNAKVNLSMTGGSCLWEAVVNNSRVAEVIRPPSGLQCSQMMLSPKGLGTTIVTVYDIGVSPPLSALALIKVADVDWIKIASGDEISIMEGSTHSIDLLTGIDDGMTFDSSQYSLMDIMVHIEDDLVEHVTVDEDSLSVGEHVATSSFKIAARRLGITTLYVSARQQSGGKVLSQTIKVEVYSPPRLHPQGIFLVPGASYVLTIEGGPTMNVSVDYTTVDNEVAKIEKSGRLYATSPGNTTIYATIYGSEGAVICQAIGNAEVGLPATAMLVAQSDTVAVGHEMPVSPSFPEGDLLSFYELCSAYKWTIEDEKVLIFIASSINVEENAGFVNVVQGRSAGKTRVTIAFSCDFVSPGLYSESRTYEASMILSVVPDLPLSLGAPMTWVLPPFYTSSGLLPSSSEPQKHRDGQSHRGNIVYSILKDCSSRADFERDTISINGGSVKTTDSNNVACIQAKDRTSGRIEIAACVRVAEVAQIRMKSEGIPFHVIDLAVGGELELPINYYDTLGIPFLEAHGVTTYNVETNHRDVVFIKTVNDQPSAYIKGIKHGKALIRVSIGDNLRKSDYVLVSVGAHIFPQNPVIHTGNLLNFSITGADNEVTGQWFTSNRSVISVNVASGQAKAISQGSTHVTFKGHGLKLQTKVTVLFGNTIYVDSPGETLTNVHVPAEGYKFPVKFRENKFAVTEHGNKATFNCQVDPPFIGYTKPWMDLDTGNTYCLFFPYSPEHLVHSMSITKDMKPHVSFSVDASLKEARRVSGSASALLIGGFSVTGPDKLNINPDSNTTIISLVGNTDVQIHCRNKGRLSISLIKRDDFGIAGHAQYKVNVLRSEQFTDRIIITLPATGQIVEIDVCYDTGESLVASSKDGYSVLLKILWGVLVLVVSVIILMKVIDRQVPTGATGTATYSGNAAQGTPERRSGTVIYHEESPRTPSPFMEYVKRTVDETPYYRREGRRRFNPQNTM.

The signal sequence occupies residues 1–22 (MVPVSFCFFFLLLLLSAGESSS). Asparagine 73, asparagine 117, asparagine 289, asparagine 609, asparagine 863, asparagine 903, asparagine 967, asparagine 982, asparagine 1171, asparagine 1199, asparagine 1550, asparagine 1568, and asparagine 1743 each carry an N-linked (GlcNAc...) asparagine glycan. The 54-residue stretch at 1152 to 1205 (IFLVPGASYVLTIEGGPTMNVSVDYTTVDNEVAKIEKSGRLYATSPGNTTIYAT) folds into the BIG2 domain. A helical membrane pass occupies residues 1829-1849 (SVLLKILWGVLVLVVSVIILM).

This sequence belongs to the NUP210 family. As to quaternary structure, part of the nuclear pore complex (NPC). The NPC has an eight-fold symmetrical structure comprising a central transport channel and two rings, the cytoplasmic and nuclear rings, to which eight filaments are attached. The cytoplasmic filaments have loose ends, while the nuclear filaments are joined in a distal ring, forming a nuclear basket. NPCs are highly dynamic in configuration and composition, and can be devided in 3 subcomplexes, the NUP62 subcomplex, the NUP107-160 subcomplex and the NUP93 subcomplex, containing approximately 30 different nucleoporin proteins.

It is found in the nucleus envelope. The protein localises to the nucleus membrane. Its subcellular location is the nucleus. It localises to the nuclear pore complex. This is Nuclear pore complex protein GP210 from Arabidopsis thaliana (Mouse-ear cress).